The sequence spans 207 residues: Probable GTP-binding protein EngB (207 aa).

One can recognise an EngB-type G domain in the interval 25–202 (DVPEIAFVGR…ATLLWQWAHP (178 aa)). GTP is bound by residues 33 to 40 (GRSNAGKS), 60 to 64 (GRTQH), 82 to 85 (DLPG), 152 to 155 (TKAD), and 181 to 183 (FSA). The Mg(2+) site is built by serine 40 and threonine 62.

It belongs to the TRAFAC class TrmE-Era-EngA-EngB-Septin-like GTPase superfamily. EngB GTPase family. Requires Mg(2+) as cofactor.

Necessary for normal cell division and for the maintenance of normal septation. This Albidiferax ferrireducens (strain ATCC BAA-621 / DSM 15236 / T118) (Rhodoferax ferrireducens) protein is Probable GTP-binding protein EngB.